Here is a 323-residue protein sequence, read N- to C-terminus: ATP synthase gamma chain (323 aa).

The protein belongs to the ATPase gamma chain family. As to quaternary structure, F-type ATPases have 2 components, CF(1) - the catalytic core - and CF(0) - the membrane proton channel. CF(1) has five subunits: alpha(3), beta(3), gamma(1), delta(1), epsilon(1). CF(0) has three main subunits: a, b and c.

It is found in the cell inner membrane. Functionally, produces ATP from ADP in the presence of a proton gradient across the membrane. The gamma chain is believed to be important in regulating ATPase activity and the flow of protons through the CF(0) complex. In Rickettsia africae (strain ESF-5), this protein is ATP synthase gamma chain.